Consider the following 81-residue polypeptide: Probable small nuclear ribonucleoprotein G (81 aa).

The Sm domain occupies 5–76 (GQPPALKKYM…VVTVEALEPV (72 aa)).

Belongs to the snRNP Sm proteins family.

It is found in the nucleus. In terms of biological role, probable common Sm protein, is found in U1 and U2 snRNPs and may be part of the spliceosome. The polypeptide is Probable small nuclear ribonucleoprotein G (C29) (Medicago sativa (Alfalfa)).